Reading from the N-terminus, the 355-residue chain is Guanine nucleotide-binding protein G(i) subunit alpha-2 (355 aa).

The N-myristoyl glycine moiety is linked to residue G2. A lipid anchor (S-palmitoyl cysteine) is attached at C3. One can recognise a G-alpha domain in the interval R32–F355. The tract at residues K35 to T48 is G1 motif. GTP is bound by residues G40–S47, L176–T182, D201–Q205, N270–D273, and A327. Mg(2+) contacts are provided by S47 and T182. Residues D174–T182 are G2 motif. Residues F197 to R206 are G3 motif. Residues I266–D273 are G4 motif. The interval T325–T330 is G5 motif.

This sequence belongs to the G-alpha family. G(i/o/t/z) subfamily. In terms of assembly, g proteins are composed of 3 units; alpha, beta and gamma. The alpha chain contains the guanine nucleotide binding site. In this context, interacts with GNB2. Interacts with UNC5B. Interacts with GPSM1. Interacts with RGS12 and RGS14. Interacts (inactive GDP-bound form) with NUCB1 (via GBA motif); the interaction leads to activation of GNAI3. Interacts (inactive GDP-bound form) with CCDC88C/DAPLE (via GBA motif). Interacts (inactive GDP-bound form) with CCDC8A/GIV (via GBA motif).

Its subcellular location is the cytoplasm. The protein resides in the cell membrane. It is found in the cytoskeleton. It localises to the microtubule organizing center. The protein localises to the centrosome. Its subcellular location is the membrane. Functionally, guanine nucleotide-binding proteins (G proteins) are involved as modulators or transducers in various transmembrane signaling systems. The G(i) proteins are involved in hormonal regulation of adenylate cyclase: they inhibit the cyclase in response to beta-adrenergic stimuli. May play a role in cell division. In Rattus norvegicus (Rat), this protein is Guanine nucleotide-binding protein G(i) subunit alpha-2 (Gnai2).